Reading from the N-terminus, the 158-residue chain is MSEKNKQNDIKVIATNRKAYHDYFIEETIEAGIELKGTEVKSVRLGHVNLKDSFARVENGEVFLYNMHISPYEKGNIFNVDPMRDRKLLLHKHEINRLAGYVQQKGYTLIPLKIYIKRGKIKVELAVAKGKKLYDKREAIAKRDAELEIRKKMKEYLR.

Belongs to the SmpB family.

The protein localises to the cytoplasm. In terms of biological role, required for rescue of stalled ribosomes mediated by trans-translation. Binds to transfer-messenger RNA (tmRNA), required for stable association of tmRNA with ribosomes. tmRNA and SmpB together mimic tRNA shape, replacing the anticodon stem-loop with SmpB. tmRNA is encoded by the ssrA gene; the 2 termini fold to resemble tRNA(Ala) and it encodes a 'tag peptide', a short internal open reading frame. During trans-translation Ala-aminoacylated tmRNA acts like a tRNA, entering the A-site of stalled ribosomes, displacing the stalled mRNA. The ribosome then switches to translate the ORF on the tmRNA; the nascent peptide is terminated with the 'tag peptide' encoded by the tmRNA and targeted for degradation. The ribosome is freed to recommence translation, which seems to be the essential function of trans-translation. The protein is SsrA-binding protein of Caldicellulosiruptor bescii (strain ATCC BAA-1888 / DSM 6725 / KCTC 15123 / Z-1320) (Anaerocellum thermophilum).